Here is a 151-residue protein sequence, read N- to C-terminus: Large ribosomal subunit protein eL8 (151 aa).

This sequence belongs to the eukaryotic ribosomal protein eL8 family. In terms of assembly, part of the 50S ribosomal subunit. Probably part of the RNase P complex.

The protein resides in the cytoplasm. Functionally, multifunctional RNA-binding protein that recognizes the K-turn motif in ribosomal RNA, the RNA component of RNase P, box H/ACA, box C/D and box C'/D' sRNAs. This chain is Large ribosomal subunit protein eL8, found in Pyrobaculum aerophilum (strain ATCC 51768 / DSM 7523 / JCM 9630 / CIP 104966 / NBRC 100827 / IM2).